Reading from the N-terminus, the 976-residue chain is 3-hydroxy-3-methylglutaryl-coenzyme A reductase (976 aa).

Residues 1–36 (MDHEGCQGQHPQQCCQWVSNAWSEFLDLLKNAETLD) are Lumenal-facing. The SSD domain occupies 36-217 (DIVIMLLGYI…FTFYTAILSI (182 aa)). Residues 37–57 (IVIMLLGYIAMHLTFVSLFLS) form a helical membrane-spanning segment. Residues 58-64 (MRKMGSK) lie on the Cytoplasmic side of the membrane. A helical membrane pass occupies residues 65–85 (FWLGICTLFSSVFAFLFGLVV). Topologically, residues 86–90 (TTKLG) are lumenal. A helical membrane pass occupies residues 91–111 (VPISVILLSEGLPFLVVTIGF). Over 112 to 169 (EKNIVLTRAVMSHAIEHRRIQAQNSKSGKRSPDGSTQNMIQYAVQAAIKEKGFEIIRD) the chain is Cytoplasmic. A helical membrane pass occupies residues 170–190 (YAIEIVILVIGAASGVQGGLQ). The Lumenal segment spans residues 191–193 (QFC). A helical transmembrane segment spans residues 194-214 (FLAAWTLFFDFILLFTFYTAI). The Cytoplasmic segment spans residues 215–272 (LSIKLRSTVSSVMSICVWPLRMMASRRVAENVAKGDDELNRVRGDAPLFGRKSSSIPK). The helical transmembrane segment at 273–293 (FKVLMILGFIFVNIVNICSIP) threads the bilayer. Residues 294-401 (FRNPSSMSTI…GGILKSLEDP (108 aa)) are Lumenal-facing. Residues 402 to 422 (VLSKWIVIALALSVALNGYLF) traverse the membrane as a helical segment. At 423-976 (NVARWGIKDP…RYSEVKAIDE (554 aa)) the chain is on the cytoplasmic side. The active-site Charge relay system is Glu618. 624 to 630 (SASRGCK) is a binding site for CoA. NADP(+) is bound by residues 685–687 (SRF) and 712–720 (DAMGMNMIS). Lys752 functions as the Charge relay system in the catalytic mechanism. 781 to 783 (VLK) provides a ligand contact to CoA. Catalysis depends on Asp828, which acts as the Charge relay system. 923–924 (AH) contacts CoA. His924 serves as the catalytic Proton donor. The tract at residues 926–954 (QHNRSAAPSRSTTPGSSHDARLTGHDQCP) is disordered. 928–929 (NR) serves as a coordination point for NADP(+). A compositionally biased stretch (polar residues) spans 928–941 (NRSAAPSRSTTPGS). A compositionally biased stretch (basic and acidic residues) spans 943–953 (HDARLTGHDQC).

It belongs to the HMG-CoA reductase family.

The protein resides in the endoplasmic reticulum membrane. It carries out the reaction (R)-mevalonate + 2 NADP(+) + CoA = (3S)-3-hydroxy-3-methylglutaryl-CoA + 2 NADPH + 2 H(+). Its pathway is metabolic intermediate biosynthesis; (R)-mevalonate biosynthesis; (R)-mevalonate from acetyl-CoA: step 3/3. Its function is as follows. HMG-CoA reductase; part of the first module of ergosterol biosynthesis pathway that includes the early steps of the pathway, conserved across all eukaryotes, and which results in the formation of mevalonate from acetyl-coenzyme A (acetyl-CoA). In this module, the cytosolic acetyl-CoA acetyltransferase catalyzes the formation of acetoacetyl-CoA. The hydroxymethylglutaryl-CoA synthase then condenses acetyl-CoA with acetoacetyl-CoA to form HMG-CoA. The rate-limiting step of the early module is the reduction to mevalonate by the 3-hydroxy-3-methylglutaryl-coenzyme A (HMG-CoA) reductase HMGR. The sequence is that of 3-hydroxy-3-methylglutaryl-coenzyme A reductase from Fusarium fujikuroi (Bakanae and foot rot disease fungus).